The primary structure comprises 216 residues: ATP phosphoribosyltransferase (216 aa).

Belongs to the ATP phosphoribosyltransferase family. Short subfamily. In terms of assembly, heteromultimer composed of HisG and HisZ subunits.

It is found in the cytoplasm. The catalysed reaction is 1-(5-phospho-beta-D-ribosyl)-ATP + diphosphate = 5-phospho-alpha-D-ribose 1-diphosphate + ATP. Its pathway is amino-acid biosynthesis; L-histidine biosynthesis; L-histidine from 5-phospho-alpha-D-ribose 1-diphosphate: step 1/9. Catalyzes the condensation of ATP and 5-phosphoribose 1-diphosphate to form N'-(5'-phosphoribosyl)-ATP (PR-ATP). Has a crucial role in the pathway because the rate of histidine biosynthesis seems to be controlled primarily by regulation of HisG enzymatic activity. The sequence is that of ATP phosphoribosyltransferase from Synechococcus sp. (strain CC9902).